The following is a 372-amino-acid chain: Protein-glutamate methylesterase/protein-glutamine glutaminase (372 aa).

Residues 5–123 form the Response regulatory domain; it reads RVLIVDDSAL…SANLTTVSET (119 aa). Asp-56 is modified (4-aspartylphosphate). Residues 140–151 are compositionally biased toward polar residues; the sequence is GTRSTDTTNSFS. The interval 140–177 is disordered; the sequence is GTRSTDTTNSFSEPFKSTIPKPMTAAEPQKEEKPTPQR. Over residues 167 to 177 the composition is skewed to basic and acidic residues; it reads PQKEEKPTPQR. The CheB-type methylesterase domain maps to 178–364; it reads EHGNIQIIAI…VSLDNMAAAI (187 aa). Residues Ser-190, His-217, and Asp-313 contribute to the active site.

It belongs to the CheB family. In terms of processing, phosphorylated by CheA. Phosphorylation of the N-terminal regulatory domain activates the methylesterase activity.

The protein localises to the cytoplasm. The catalysed reaction is [protein]-L-glutamate 5-O-methyl ester + H2O = L-glutamyl-[protein] + methanol + H(+). It catalyses the reaction L-glutaminyl-[protein] + H2O = L-glutamyl-[protein] + NH4(+). Its function is as follows. Involved in chemotaxis. Part of a chemotaxis signal transduction system that modulates chemotaxis in response to various stimuli. Catalyzes the demethylation of specific methylglutamate residues introduced into the chemoreceptors (methyl-accepting chemotaxis proteins or MCP) by CheR. Also mediates the irreversible deamidation of specific glutamine residues to glutamic acid. This chain is Protein-glutamate methylesterase/protein-glutamine glutaminase, found in Treponema denticola (strain ATCC 35405 / DSM 14222 / CIP 103919 / JCM 8153 / KCTC 15104).